A 215-amino-acid polypeptide reads, in one-letter code: Pyrrolidone-carboxylate peptidase (215 aa).

Residues glutamate 80, cysteine 143, and histidine 167 contribute to the active site.

The protein belongs to the peptidase C15 family. As to quaternary structure, homotetramer.

It is found in the cytoplasm. It catalyses the reaction Release of an N-terminal pyroglutamyl group from a polypeptide, the second amino acid generally not being Pro.. Its function is as follows. Removes 5-oxoproline from various penultimate amino acid residues except L-proline. This chain is Pyrrolidone-carboxylate peptidase, found in Yersinia pseudotuberculosis serotype O:3 (strain YPIII).